A 477-amino-acid chain; its full sequence is Aspartyl/glutamyl-tRNA(Asn/Gln) amidotransferase subunit B (477 aa).

This sequence belongs to the GatB/GatE family. GatB subfamily. Heterotrimer of A, B and C subunits.

It catalyses the reaction L-glutamyl-tRNA(Gln) + L-glutamine + ATP + H2O = L-glutaminyl-tRNA(Gln) + L-glutamate + ADP + phosphate + H(+). The enzyme catalyses L-aspartyl-tRNA(Asn) + L-glutamine + ATP + H2O = L-asparaginyl-tRNA(Asn) + L-glutamate + ADP + phosphate + 2 H(+). In terms of biological role, allows the formation of correctly charged Asn-tRNA(Asn) or Gln-tRNA(Gln) through the transamidation of misacylated Asp-tRNA(Asn) or Glu-tRNA(Gln) in organisms which lack either or both of asparaginyl-tRNA or glutaminyl-tRNA synthetases. The reaction takes place in the presence of glutamine and ATP through an activated phospho-Asp-tRNA(Asn) or phospho-Glu-tRNA(Gln). This is Aspartyl/glutamyl-tRNA(Asn/Gln) amidotransferase subunit B from Lactococcus lactis subsp. cremoris (strain SK11).